Reading from the N-terminus, the 412-residue chain is N-carbamoyl-L-amino-acid amidohydrolase (412 aa).

A divalent metal cation is bound by residues histidine 82, aspartate 93, glutamate 128, and histidine 193. An N-carbamoyl-L-alpha-amino acid-binding residues include glutamine 196, histidine 229, asparagine 278, arginine 291, and glycine 360. Residues 212–330 (SIVGVRALRV…DVDEFFNLSP (119 aa)) form an involved in dimerization region. An a divalent metal cation-binding site is contributed by histidine 385.

It belongs to the peptidase M20 family. As to quaternary structure, homodimer. Requires Mn(2+) as cofactor. The cofactor is Ni(2+). It depends on Co(2+) as a cofactor. Fe(2+) serves as cofactor.

It carries out the reaction an N-carbamoyl-L-alpha-amino acid + H2O + 2 H(+) = an L-alpha-amino acid + NH4(+) + CO2. The catalysed reaction is N-carbamoyl-L-tryptophan + H2O + 2 H(+) = L-tryptophan + NH4(+) + CO2. The enzyme catalyses N-carbamoyl-L-tyrosine + H2O + 2 H(+) = L-tyrosine + NH4(+) + CO2. It catalyses the reaction N-carbamoyl-L-phenylalanine + H2O + 2 H(+) = L-phenylalanine + NH4(+) + CO2. In terms of biological role, catalyzes the hydrolysis of aliphatic N-carbamoyl-L-alpha-amino acids to free L-alpha-amino acids. Is strictly L-specific since it is inactive toward N-carbamoyl-D-alpha-amino acids. Shows a preference for aromatic N-carbamoyl-L-alpha-amino acids, such as N-carbamoyl-L-tryptophan and N-carbamoyl-L-tyrosine and, to a lesser extent, N-carbamoyl-L-phenylalanine and the non-natural amino acid N-carbamoyl-L-thienylalanine. Carbamoyl derivatives of beta-alanine and charged aliphatic amino acids are not accepted as substrates. In Paenarthrobacter aurescens (Arthrobacter aurescens), this protein is N-carbamoyl-L-amino-acid amidohydrolase.